Reading from the N-terminus, the 371-residue chain is Putative F-box protein At1g58090 (371 aa).

In terms of domain architecture, F-box spans 1–46 (MVSKKLPLDLEEEILFRVPPRSLVRFRSVCREWNTLFKNKRFINKN).

In Arabidopsis thaliana (Mouse-ear cress), this protein is Putative F-box protein At1g58090.